Reading from the N-terminus, the 90-residue chain is uncharacterized protein (90 aa).

A helical transmembrane segment spans residues 32–52 (IIINLIPLVLLFAFFCPCIYF).

It localises to the membrane. This is an uncharacterized protein from Schizosaccharomyces pombe (strain 972 / ATCC 24843) (Fission yeast).